Reading from the N-terminus, the 272-residue chain is S-adenosylmethionine decarboxylase proenzyme (272 aa).

The active-site Schiff-base intermediate with substrate; via pyruvic acid is the Ser-122. Ser-122 is subject to Pyruvic acid (Ser); by autocatalysis. Residue His-127 is the Proton acceptor; for processing activity of the active site. The Proton donor; for catalytic activity role is filled by Cys-150.

The protein belongs to the prokaryotic AdoMetDC family. Type 2 subfamily. In terms of assembly, heterooctamer of four alpha and four beta chains arranged as a tetramer of alpha/beta heterodimers. Pyruvate serves as cofactor. Is synthesized initially as an inactive proenzyme. Formation of the active enzyme involves a self-maturation process in which the active site pyruvoyl group is generated from an internal serine residue via an autocatalytic post-translational modification. Two non-identical subunits are generated from the proenzyme in this reaction, and the pyruvate is formed at the N-terminus of the alpha chain, which is derived from the carboxyl end of the proenzyme. The post-translation cleavage follows an unusual pathway, termed non-hydrolytic serinolysis, in which the side chain hydroxyl group of the serine supplies its oxygen atom to form the C-terminus of the beta chain, while the remainder of the serine residue undergoes an oxidative deamination to produce ammonia and the pyruvoyl group blocking the N-terminus of the alpha chain.

The enzyme catalyses S-adenosyl-L-methionine + H(+) = S-adenosyl 3-(methylsulfanyl)propylamine + CO2. It participates in amine and polyamine biosynthesis; S-adenosylmethioninamine biosynthesis; S-adenosylmethioninamine from S-adenosyl-L-methionine: step 1/1. Its function is as follows. Catalyzes the decarboxylation of S-adenosylmethionine to S-adenosylmethioninamine (dcAdoMet), the propylamine donor required for the synthesis of the polyamines spermine and spermidine from the diamine putrescine. This Clostridium botulinum (strain Alaska E43 / Type E3) protein is S-adenosylmethionine decarboxylase proenzyme.